Consider the following 122-residue polypeptide: Large ribosomal subunit protein uL14 (122 aa).

The protein belongs to the universal ribosomal protein uL14 family. In terms of assembly, part of the 50S ribosomal subunit. Forms a cluster with proteins L3 and L19. In the 70S ribosome, L14 and L19 interact and together make contacts with the 16S rRNA in bridges B5 and B8.

Its function is as follows. Binds to 23S rRNA. Forms part of two intersubunit bridges in the 70S ribosome. The sequence is that of Large ribosomal subunit protein uL14 from Thermosynechococcus vestitus (strain NIES-2133 / IAM M-273 / BP-1).